The sequence spans 475 residues: Arginine biosynthesis bifunctional protein ArgJ 1, mitochondrial (475 aa).

Substrate-binding residues include T204, K233, T244, E331, N470, and T475. T244 (nucleophile) is an active-site residue.

It belongs to the ArgJ family. In terms of assembly, heterodimer of an alpha and a beta chain. The alpha and beta chains are autoproteolytically processed from a single precursor protein within the mitochondrion.

It localises to the mitochondrion matrix. The enzyme catalyses N(2)-acetyl-L-ornithine + L-glutamate = N-acetyl-L-glutamate + L-ornithine. It carries out the reaction L-glutamate + acetyl-CoA = N-acetyl-L-glutamate + CoA + H(+). It functions in the pathway amino-acid biosynthesis; L-arginine biosynthesis; L-ornithine and N-acetyl-L-glutamate from L-glutamate and N(2)-acetyl-L-ornithine (cyclic): step 1/1. Its pathway is amino-acid biosynthesis; L-arginine biosynthesis; N(2)-acetyl-L-ornithine from L-glutamate: step 1/4. Catalyzes two activities which are involved in the cyclic version of arginine biosynthesis: the synthesis of acetylglutamate from glutamate and acetyl-CoA, and of ornithine by transacetylation between acetylornithine and glutamate. The chain is Arginine biosynthesis bifunctional protein ArgJ 1, mitochondrial from Botryotinia fuckeliana (strain B05.10) (Noble rot fungus).